We begin with the raw amino-acid sequence, 301 residues long: Putative dynamin-related protein 4A (301 aa).

The Dynamin-type G domain occupies 59 to 301; that stretch reads GIQLPTIVVV…LIDGDIVGIL (243 aa). The tract at residues 69 to 76 is G1 motif; sequence GDQSSGKS. 69–76 serves as a coordination point for GTP; it reads GDQSSGKS. Residues 94–96 form a G2 motif region; the sequence is CTR. The tract at residues 168–171 is G3 motif; the sequence is DLPG. Residues 168 to 172 and 237 to 240 each bind GTP; these read DLPGI and TKAD. Residues 237 to 240 are G4 motif; that stretch reads TKAD. Glu-270 is a region of interest (G5 motif).

Belongs to the TRAFAC class dynamin-like GTPase superfamily. Dynamin/Fzo/YdjA family.

The sequence is that of Putative dynamin-related protein 4A (DRP4A) from Arabidopsis thaliana (Mouse-ear cress).